The chain runs to 34 residues: Protamine-Y1/Y2 (34 aa).

Residues 1-34 (PRRRRQASRPVRRRRRYRRSTAARRRRRVVRRRR) form a disordered region.

In terms of tissue distribution, testis.

The protein resides in the nucleus. It is found in the chromosome. Protamines substitute for histones in the chromatin of sperm during the haploid phase of spermatogenesis. They compact sperm DNA into a highly condensed, stable and inactive complex. This chain is Protamine-Y1/Y2, found in Thunnus thynnus (Atlantic bluefin tuna).